The following is a 95-amino-acid chain: Aspartyl/glutamyl-tRNA(Asn/Gln) amidotransferase subunit C (95 aa).

The protein belongs to the GatC family. Heterotrimer of A, B and C subunits.

The catalysed reaction is L-glutamyl-tRNA(Gln) + L-glutamine + ATP + H2O = L-glutaminyl-tRNA(Gln) + L-glutamate + ADP + phosphate + H(+). It catalyses the reaction L-aspartyl-tRNA(Asn) + L-glutamine + ATP + H2O = L-asparaginyl-tRNA(Asn) + L-glutamate + ADP + phosphate + 2 H(+). Its function is as follows. Allows the formation of correctly charged Asn-tRNA(Asn) or Gln-tRNA(Gln) through the transamidation of misacylated Asp-tRNA(Asn) or Glu-tRNA(Gln) in organisms which lack either or both of asparaginyl-tRNA or glutaminyl-tRNA synthetases. The reaction takes place in the presence of glutamine and ATP through an activated phospho-Asp-tRNA(Asn) or phospho-Glu-tRNA(Gln). This is Aspartyl/glutamyl-tRNA(Asn/Gln) amidotransferase subunit C from Chromohalobacter salexigens (strain ATCC BAA-138 / DSM 3043 / CIP 106854 / NCIMB 13768 / 1H11).